The chain runs to 281 residues: 2-dehydro-3-deoxyphosphooctonate aldolase (281 aa).

It belongs to the KdsA family.

The protein localises to the cytoplasm. The catalysed reaction is D-arabinose 5-phosphate + phosphoenolpyruvate + H2O = 3-deoxy-alpha-D-manno-2-octulosonate-8-phosphate + phosphate. The protein operates within carbohydrate biosynthesis; 3-deoxy-D-manno-octulosonate biosynthesis; 3-deoxy-D-manno-octulosonate from D-ribulose 5-phosphate: step 2/3. It functions in the pathway bacterial outer membrane biogenesis; lipopolysaccharide biosynthesis. The sequence is that of 2-dehydro-3-deoxyphosphooctonate aldolase from Pseudomonas fluorescens (strain SBW25).